The sequence spans 89 residues: MSLSVEAKAKIVSEFGRGENDSGSTEVQVALLTAQINHLQGHFAEHKKDHHSRRGLLRMVSQRRKLLDYLKRKDVARYSALIERLGLRR.

The protein belongs to the universal ribosomal protein uS15 family. In terms of assembly, part of the 30S ribosomal subunit. Forms a bridge to the 50S subunit in the 70S ribosome, contacting the 23S rRNA.

One of the primary rRNA binding proteins, it binds directly to 16S rRNA where it helps nucleate assembly of the platform of the 30S subunit by binding and bridging several RNA helices of the 16S rRNA. Functionally, forms an intersubunit bridge (bridge B4) with the 23S rRNA of the 50S subunit in the ribosome. This chain is Small ribosomal subunit protein uS15, found in Klebsiella pneumoniae subsp. pneumoniae (strain ATCC 700721 / MGH 78578).